A 461-amino-acid chain; its full sequence is Phosphoenolpyruvate carboxylase (461 aa).

Belongs to the PEPCase type 2 family. As to quaternary structure, homotetramer. Mg(2+) is required as a cofactor.

It catalyses the reaction oxaloacetate + phosphate = phosphoenolpyruvate + hydrogencarbonate. Its function is as follows. Catalyzes the irreversible beta-carboxylation of phosphoenolpyruvate (PEP) to form oxaloacetate (OAA), a four-carbon dicarboxylic acid source for the tricarboxylic acid cycle. This is Phosphoenolpyruvate carboxylase from Pyrobaculum islandicum (strain DSM 4184 / JCM 9189 / GEO3).